Consider the following 473-residue polypeptide: Photosystem II CP43 reaction center protein (473 aa).

The propeptide occupies 1–14 (MKTLYSPRRYYPVE). Thr15 is modified (N-acetylthreonine). Thr15 carries the post-translational modification Phosphothreonine. A run of 5 helical transmembrane segments spans residues 69-93 (LFEV…PHLA), 134-155 (IIGP…KDKN), 178-200 (KAVW…RVIT), 255-275 (KPFA…LSYS), and 291-312 (WFNN…ASQA). Glu367 contributes to the [CaMn4O5] cluster binding site. The chain crosses the membrane as a helical span at residues 447–471 (RARAAAAGFEKGIERETEPVLFMSP).

It belongs to the PsbB/PsbC family. PsbC subfamily. As to quaternary structure, PSII is composed of 1 copy each of membrane proteins PsbA, PsbB, PsbC, PsbD, PsbE, PsbF, PsbH, PsbI, PsbJ, PsbK, PsbL, PsbM, PsbT, PsbX, PsbY, PsbZ, Psb30/Ycf12, at least 3 peripheral proteins of the oxygen-evolving complex and a large number of cofactors. It forms dimeric complexes. Requires Binds multiple chlorophylls and provides some of the ligands for the Ca-4Mn-5O cluster of the oxygen-evolving complex. It may also provide a ligand for a Cl- that is required for oxygen evolution. PSII binds additional chlorophylls, carotenoids and specific lipids. as cofactor.

It is found in the plastid. The protein resides in the chloroplast thylakoid membrane. In terms of biological role, one of the components of the core complex of photosystem II (PSII). It binds chlorophyll and helps catalyze the primary light-induced photochemical processes of PSII. PSII is a light-driven water:plastoquinone oxidoreductase, using light energy to abstract electrons from H(2)O, generating O(2) and a proton gradient subsequently used for ATP formation. This chain is Photosystem II CP43 reaction center protein, found in Chaetosphaeridium globosum (Charophycean green alga).